A 401-amino-acid chain; its full sequence is Solute carrier family 22 member 17 (401 aa).

A run of 10 helical transmembrane segments spans residues 10-30, 35-55, 69-89, 100-120, 184-203, 218-238, 247-267, 277-297, 309-329, and 336-356; these read GIVLLTLGLVGPCGVGGAAAG, IMALRFLLGFLLAGVDLGVYL, VALAGELVGVGGHFLFLGLAL, MITAPCILFLFYGWPGLFLES, NIWKNLLILGFTNFIAHAIR, FYLCSLLASGTAALACVFLGV, GILLLSMTLTGIASLVLLGLW, TFSVLGLFSSQASAILSTLLA, GLGLIMALGALGGLSCPAQRL, and FLQHVVLAACALLCILSIMLL.

Belongs to the major facilitator (TC 2.A.1) superfamily. Organic cation transporter (TC 2.A.1.19) family. Widely expressed.

The protein resides in the cell membrane. It is found in the vacuole membrane. Cell surface receptor for LCN2 (24p3) that plays a key role in iron homeostasis and transport. Able to bind iron-bound LCN2 (holo-24p3), followed by internalization of holo-24p3 and release of iron, thereby increasing intracellular iron concentration and leading to inhibition of apoptosis. Also binds iron-free LCN2 (apo-24p3), followed by internalization of apo-24p3 and its association with an intracellular siderophore, leading to iron chelation and iron transfer to the extracellular medium, thereby reducing intracellular iron concentration and resulting in apoptosis. In Mus musculus (Mouse), this protein is Solute carrier family 22 member 17 (Slc22a17).